We begin with the raw amino-acid sequence, 1191 residues long: Zinc finger protein ush (1191 aa).

2 disordered regions span residues 1 to 153 (MLSS…PKYP) and 169 to 194 (PDAK…DTQA). Over residues 19–28 (VDSRDSKDLS) the composition is skewed to basic and acidic residues. A compositionally biased stretch (acidic residues) spans 61 to 73 (IDDDADEDAEFEE). A phosphoserine mark is found at Ser-116 and Ser-118. Positions 130 to 151 (ATPPSEPEASPCPSPSPCPTPK) are enriched in pro residues. The CCHC FOG-type 1 zinc finger occupies 202 to 235 (LLKPARFMCLPCGIAFSSPSTLEAHQAYYCSHRI). 4 residues coordinate Zn(2+): Cys-210, Cys-213, His-226, and Cys-231. The segment at 239 to 274 (DEAGSDKSGAGGSGATAGDAAGLTGGSTEPPAKMAR) is disordered. Low complexity predominate over residues 254–266 (TAGDAAGLTGGST). The segment at 279–301 (YGCTQCSYSADKKVSLNRHMRMH) adopts a C2H2-type 1 zinc-finger fold. The interval 304 to 338 (SPAAPTLAGLPSLLQNGIAPPGVTPNPMEDSSSQQ) is disordered. The CCHC FOG-type 2 zinc finger occupies 335–368 (SSQQTDRYCSHCDIRFNNIKTYRAHKQHYCSSRR). The Zn(2+) site is built by Cys-343, Cys-346, His-359, and Cys-364. Disordered stretches follow at residues 361–413 (QHYC…ARNK), 504–540 (EPER…ESAP), and 601–635 (APSL…MSPP). Over residues 383-394 (AGSGPGSAGGSI) the composition is skewed to gly residues. Composition is skewed to low complexity over residues 509-523 (SAPS…AKSS), 602-613 (PSLPSSPSMSPS), and 620-635 (SPRS…MSPP). 2 consecutive CCHC FOG-type zinc fingers follow at residues 720 to 753 (YVKK…SARS) and 791 to 824 (PVAY…PKGG). Zn(2+)-binding residues include Cys-728, Cys-731, His-744, Cys-749, Cys-799, Cys-802, His-815, and Cys-820. 3 C2H2-type zinc fingers span residues 882 to 907 (NKCP…HGTV), 910 to 932 (YRCS…IRTH), and 983 to 1006 (FNCD…KLMH). Residues 1011–1073 (INSPSISPDT…HENNNSPIAT (63 aa)) form a disordered region. 3 positions are modified to phosphoserine: Ser-1013, Ser-1015, and Ser-1017. Residues 1025 to 1040 (VTSNPTTNQHSNSDVS) show a composition bias toward polar residues. The CCHC FOG-type 5 zinc finger occupies 1113 to 1146 (AAEVMKKYCSTCDISFNYVKTYLAHKQFYCKNKP). Zn(2+) contacts are provided by Cys-1121, Cys-1124, His-1137, and Cys-1142. Ser-1156 bears the Phosphoserine mark.

This sequence belongs to the FOG (Friend of GATA) family. Interacts with pnr, although weak this interaction is essential. Interacts with the isoform SrpNC of srp. Interacts with CtBP corepressor. First expressed in stage 5 at high levels in the primordium of the amnioserosa. Also expressed in germ band extending embryos in cells of the developing anterior and posterior midgut and in hemocyte precursors present in the cephalic mesoderm. In embryonic stage 8, it is expressed in blood cell precursors. By stage 10, it is expressed in hemocyte precursors that have spread throughout the lateral and ventral head mesoderm. By stage 11, it is expressed in the dorsal ectoderm and in precursor cells of the hemocytes and fat body. As embryogenesis proceeds, it is also expressed in stage 13 plasmatocytes migrating throughout the head mesoderm and down the ventral midline. By late embryogenesis, expression strongly decreases but remains in the dorsal ectoderm during dorsal closure, in cells within, or associated with, the central nervous system, and in plasmatocytes circulating throughout the embryonic hemolymph. During larval development, it is expressed in primary and secondary lobes of lymph glands. Expressed in the dorsal part of the thoracic imaginal disk.

The protein localises to the nucleus. In terms of biological role, transcription regulator that modulates expression mediated by transcription factors of the GATA family such as pnr and srp. Represses transcription of proneural achaete-scute complex (AS-C), which is usually activated by pnr. Involved in cardiogenesis, blood, and eye development. During hematopoiesis, it is required to restrict the number of crystal cells, probably via its interaction with the isoform SrpNC of srp. Negatively regulates expression of sr. Probably acts by interacting with the GATA-type zinc finger of proteins such as pnr and srp, possibly antagonizing the interaction between the GATA-type zinc finger and some cofactor. This Drosophila melanogaster (Fruit fly) protein is Zinc finger protein ush (ush).